We begin with the raw amino-acid sequence, 270 residues long: Endochitinase PR4 (270 aa).

The first 23 residues, 1 to 23, serve as a signal peptide directing secretion; sequence MGNKLVLVLVAVALVMGPKNVSA. The 35-residue stretch at 24-58 folds into the Chitin-binding type-1 domain; sequence QNCGCAEGLCCSQYGYCGTGEDYCGTGCQQGPCTT. Disulfide bonds link cysteine 26–cysteine 34, cysteine 28–cysteine 40, cysteine 33–cysteine 47, cysteine 51–cysteine 56, cysteine 88–cysteine 137, cysteine 150–cysteine 160, and cysteine 238–cysteine 270. Catalysis depends on glutamate 132, which acts as the Proton donor.

This sequence belongs to the glycosyl hydrolase 19 family. Chitinase class I subfamily.

It catalyses the reaction Random endo-hydrolysis of N-acetyl-beta-D-glucosaminide (1-&gt;4)-beta-linkages in chitin and chitodextrins.. Defense against chitin-containing fungal pathogens. This chain is Endochitinase PR4 (CHI4), found in Phaseolus vulgaris (Kidney bean).